The sequence spans 361 residues: Peptide chain release factor 1 (361 aa).

Position 235 is an N5-methylglutamine (Gln-235).

It belongs to the prokaryotic/mitochondrial release factor family. In terms of processing, methylated by PrmC. Methylation increases the termination efficiency of RF1.

It is found in the cytoplasm. Peptide chain release factor 1 directs the termination of translation in response to the peptide chain termination codons UAG and UAA. The protein is Peptide chain release factor 1 of Buchnera aphidicola subsp. Schizaphis graminum (strain Sg).